A 275-amino-acid chain; its full sequence is uncharacterized protein (275 aa).

NAD(+) is bound by residues Arg-20–Gln-22, Asp-41–Ile-42, Asp-80–Val-81, and Asn-107. Ser-160 serves as a coordination point for substrate. Tyr-173 (proton acceptor) is an active-site residue. NAD(+) contacts are provided by residues Lys-177 and Val-206 to Thr-208.

Belongs to the short-chain dehydrogenases/reductases (SDR) family.

This is an uncharacterized protein from Mycolicibacterium paratuberculosis (strain ATCC BAA-968 / K-10) (Mycobacterium paratuberculosis).